Consider the following 247-residue polypeptide: MGQKIHPHGLRLGITSEWRSRWYADKQYADYLAEDIKIRDFLSEGLDRAGIANVVIERTHDRVRVDIHTARPGIVIGRRGSEADRIRGQLEKLTGKQVQLNILEVKNIDANAQLVAQSIAEQLTNRVAFRRAMRKAIQGAMRQPQVKGIKVVCSGRLGGAEMGRTERYHEGRVPLHTLRAEIDYGTYEAHTTFGRIGVKVWIYKGDVVGGRRESLMNARDERPSRGRRERPRRGGARRQRAEQKQEG.

In terms of domain architecture, KH type-2 spans 38 to 106 (IRDFLSEGLD…QVQLNILEVK (69 aa)). Positions 214-226 (SLMNARDERPSRG) are enriched in basic and acidic residues. Residues 214 to 247 (SLMNARDERPSRGRRERPRRGGARRQRAEQKQEG) are disordered. The span at 227-238 (RRERPRRGGARR) shows a compositional bias: basic residues.

This sequence belongs to the universal ribosomal protein uS3 family. As to quaternary structure, part of the 30S ribosomal subunit. Forms a tight complex with proteins S10 and S14.

Functionally, binds the lower part of the 30S subunit head. Binds mRNA in the 70S ribosome, positioning it for translation. The polypeptide is Small ribosomal subunit protein uS3 (Corynebacterium jeikeium (strain K411)).